A 101-amino-acid chain; its full sequence is Venom peptide Pc (101 aa).

Positions 1–20 are cleaved as a signal peptide; sequence MSHLRIAVIFLCTLFALTAG.

It belongs to the scorpion La1-like peptide family. In terms of processing, contains 4 disulfide bonds. Expressed by the venom gland.

The protein localises to the secreted. The sequence is that of Venom peptide Pc from Pandinus cavimanus (Tanzanian red clawed scorpion).